Consider the following 480-residue polypeptide: uncharacterized protein (480 aa).

The helical transmembrane segment at 7–28 (HVISIFETFGAYFINIFYNFLY) threads the bilayer. N-linked (GlcNAc...) asparagine; by host glycosylation is found at Asn73 and Asn195. A coiled-coil region spans residues 195–235 (NRSLLYQIEELTSEKKSLLAELSTLRKKYEKRQSEYRRLVQ). The segment at 297–332 (ELTSKSPSNYPVPQSRTIVSKPSDNYPVPQSRSSKI) is disordered. A compositionally biased stretch (polar residues) spans 301 to 329 (KSPSNYPVPQSRTIVSKPSDNYPVPQSRS). A glycan (N-linked (GlcNAc...) asparagine; by host) is linked at Asn455.

This sequence belongs to the asfivirus B475L family.

The protein resides in the host membrane. This is an uncharacterized protein from African swine fever virus (isolate Pig/Kenya/KEN-50/1950) (ASFV).